Consider the following 607-residue polypeptide: Chaperone protein DnaK (607 aa).

Residue Thr-174 is modified to Phosphothreonine; by autocatalysis. Residues 577 to 594 are compositionally biased toward polar residues; sequence QSAGSTAGNPGQGQSTEN. Residues 577–607 form a disordered region; the sequence is QSAGSTAGNPGQGQSTENPGGKTIDGDYKVN.

This sequence belongs to the heat shock protein 70 family.

In terms of biological role, acts as a chaperone. This chain is Chaperone protein DnaK, found in Dictyoglomus turgidum (strain DSM 6724 / Z-1310).